A 197-amino-acid chain; its full sequence is Elongation factor Ts (197 aa).

The involved in Mg(2+) ion dislocation from EF-Tu stretch occupies residues 81 to 84 (TDFV).

This sequence belongs to the EF-Ts family.

The protein resides in the cytoplasm. In terms of biological role, associates with the EF-Tu.GDP complex and induces the exchange of GDP to GTP. It remains bound to the aminoacyl-tRNA.EF-Tu.GTP complex up to the GTP hydrolysis stage on the ribosome. This chain is Elongation factor Ts, found in Sulfurihydrogenibium sp. (strain YO3AOP1).